Here is a 167-residue protein sequence, read N- to C-terminus: Lipoprotein signal peptidase (167 aa).

The next 3 helical transmembrane spans lie at 8–28 (FFLL…YWIM), 61–81 (FSHW…LWLW), and 93–113 (FGLT…ICFY). Catalysis depends on residues Asp-117 and Asp-136. Residues 126–146 (IFYFAVFNLADTFITLGVIAI) form a helical membrane-spanning segment.

It belongs to the peptidase A8 family.

The protein localises to the cell inner membrane. It catalyses the reaction Release of signal peptides from bacterial membrane prolipoproteins. Hydrolyzes -Xaa-Yaa-Zaa-|-(S,diacylglyceryl)Cys-, in which Xaa is hydrophobic (preferably Leu), and Yaa (Ala or Ser) and Zaa (Gly or Ala) have small, neutral side chains.. Its pathway is protein modification; lipoprotein biosynthesis (signal peptide cleavage). In terms of biological role, this protein specifically catalyzes the removal of signal peptides from prolipoproteins. This chain is Lipoprotein signal peptidase, found in Bartonella quintana (strain Toulouse) (Rochalimaea quintana).